Reading from the N-terminus, the 69-residue chain is Large ribosomal subunit protein uL29 (69 aa).

The protein belongs to the universal ribosomal protein uL29 family.

The protein is Large ribosomal subunit protein uL29 of Oenococcus oeni (strain ATCC BAA-331 / PSU-1).